The chain runs to 321 residues: Homoserine O-acetyltransferase (321 aa).

Residue Cys142 is the Acyl-thioester intermediate of the active site. The substrate site is built by Lys163 and Ser192. Catalysis depends on His235, which acts as the Proton acceptor. Glu237 is a catalytic residue. Residue Arg249 coordinates substrate.

The protein belongs to the MetA family.

The protein resides in the cytoplasm. The catalysed reaction is L-homoserine + acetyl-CoA = O-acetyl-L-homoserine + CoA. Its pathway is amino-acid biosynthesis; L-methionine biosynthesis via de novo pathway; O-acetyl-L-homoserine from L-homoserine: step 1/1. Functionally, transfers an acetyl group from acetyl-CoA to L-homoserine, forming acetyl-L-homoserine. The sequence is that of Homoserine O-acetyltransferase from Lactococcus lactis subsp. lactis (strain IL1403) (Streptococcus lactis).